Reading from the N-terminus, the 227-residue chain is Staphylococcal superantigen-like 10 (227 aa).

A signal peptide spans 1-30 (MKFTALAKATLALGILTTGTLTTEVHSGHA).

It belongs to the staphylococcal/streptococcal toxin family. In terms of assembly, interacts with prothrombin/F2 and coagulation factor X/F12. Interacts with human CXCR4.

It localises to the secreted. Its function is as follows. Plays a role in the inhibition of host complement activation via the classical pathway by interacting with the Fc region of human IgG and thereby interfering with the IgG/C1q interaction. Also inhibits the penultimate step of plasma clotting by interacting with prothrombin/F2 and coagulation factor X/F12. Does not affect the protease activity of thrombin but interferes with the conversion of prothrombin to thrombin. Interacts with human receptor CXCR4 and specifically inhibits CXCL12-induced calcium mobilization and cell migration. In Staphylococcus aureus (strain NCTC 8325 / PS 47), this protein is Staphylococcal superantigen-like 10.